Reading from the N-terminus, the 318-residue chain is Cytosolic Fe-S cluster assembly factor Nubp1 homolog (318 aa).

Residues 1-15 (MSAPEVENKPADAPE) show a composition bias toward basic and acidic residues. The disordered stretch occupies residues 1–29 (MSAPEVENKPADAPEHCPGTESENAGKAS). [4Fe-4S] cluster contacts are provided by Cys17, Cys31, Cys34, and Cys40. An ATP-binding site is contributed by 70–77 (GKGGVGKS). [4Fe-4S] cluster-binding residues include Cys245 and Cys248.

The protein belongs to the Mrp/NBP35 ATP-binding proteins family. NUBP1/NBP35 subfamily. As to quaternary structure, heterotetramer of 2 Nubp1 and 2 Nubp2 chains. [4Fe-4S] cluster serves as cofactor.

The protein localises to the cytoplasm. Functionally, component of the cytosolic iron-sulfur (Fe/S) protein assembly (CIA) machinery. Required for maturation of extramitochondrial Fe-S proteins. The Nubp1-Nubp2 heterotetramer forms a Fe-S scaffold complex, mediating the de novo assembly of an Fe-S cluster and its transfer to target apoproteins. The protein is Cytosolic Fe-S cluster assembly factor Nubp1 homolog of Aedes aegypti (Yellowfever mosquito).